Reading from the N-terminus, the 568-residue chain is MFLDYSGYEALTEINSSFGKYVLLLQQFEGCRSLKDRLQMLKDLGREFMIFENLNVEDFRESKNMIHRFYTMVISLRQIMEIGPLVRRSPAVLVVEFDCPVEDCLDELDPLHPLNRAFIFIHKQWTYYHQYYIVEKVKKVILDMAPVKEDDWSILHKVVYSEGFVERRYKKKKYLGDIYIPQPLMKSNKITTISNFSQLTKISNVRVYRFNATAACDPQNLNKKNLSIKELKDKDLPNLIWTLEPEKFYVDMRPYKEHEERKKRREEEAKVRMQGEEQENIMIERKKMDSIEVEASSGLKNIIKTPLANRVVNTFNNCAAVVIGYVTEVDKVKDDNEEKNNDRPKIANDGIAQKSRSESEDNAGTPMENAYFQPEPQDNDQNNISWNTTMKDIDPIYMSERCARVWRKEQQMLGLEKAQTFEKKYCKDQMVMDENQVEEPGKHSERHTKNQVVRPRTKIASSASKNDNSNNKNSKSCKNCHKEEAHGLVREYLKIKLNISPHGERNQRTKDKRKCIMKYNASSNNINKMPGESEVLGSTILTDIHFKDVVTVKFRDFKAKFRKVKINA.

Over residues 334-346 the composition is skewed to basic and acidic residues; it reads DDNEEKNNDRPKI. Disordered regions lie at residues 334–382 and 436–479; these read DDNE…NDQN and QVEE…SCKN. The segment covering 458 to 477 has biased composition (low complexity); sequence KIASSASKNDNSNNKNSKSC.

The protein to yeast YJL043w.

This is an uncharacterized protein from Saccharomyces cerevisiae (strain ATCC 204508 / S288c) (Baker's yeast).